The sequence spans 152 residues: Histone H2B.9 (152 aa).

Basic and acidic residues-rich tracts occupy residues 1–16 (MAPKAEKKPAAKKPAE) and 34–52 (EKRLPAGKGEKGGAGEGKK). Residues 1 to 59 (MAPKAEKKPAAKKPAEEEPAAEKAPAAGKKPKAEKRLPAGKGEKGGAGEGKKAGRKKGK) form a disordered region. An N6-acetyllysine mark is found at Lys7 and Lys35. Residue Lys148 forms a Glycyl lysine isopeptide (Lys-Gly) (interchain with G-Cter in ubiquitin) linkage.

This sequence belongs to the histone H2B family. As to quaternary structure, the nucleosome is a histone octamer containing two molecules each of H2A, H2B, H3 and H4 assembled in one H3-H4 heterotetramer and two H2A-H2B heterodimers. The octamer wraps approximately 147 bp of DNA. In terms of processing, can be acetylated to form H2BK6ac and H2BK33ac. Monoubiquitinated by BRE1 to form H2BK143ub1 and deubiquitinated by UBP26. Required for heterochromatic histone H3 di- and trimethylation at H3K4me. May give a specific tag for epigenetic transcriptional activation.

It is found in the nucleus. Its subcellular location is the chromosome. Its function is as follows. Core component of nucleosome. Nucleosomes wrap and compact DNA into chromatin, limiting DNA accessibility to the cellular machineries which require DNA as a template. Histones thereby play a central role in transcription regulation, DNA repair, DNA replication and chromosomal stability. DNA accessibility is regulated via a complex set of post-translational modifications of histones, also called histone code, and nucleosome remodeling. This is Histone H2B.9 (H2B.9) from Oryza sativa subsp. indica (Rice).